Here is a 315-residue protein sequence, read N- to C-terminus: Methionyl-tRNA formyltransferase (315 aa).

Residue 113-116 coordinates (6S)-5,6,7,8-tetrahydrofolate; the sequence is SLLP.

Belongs to the Fmt family.

The enzyme catalyses L-methionyl-tRNA(fMet) + (6R)-10-formyltetrahydrofolate = N-formyl-L-methionyl-tRNA(fMet) + (6S)-5,6,7,8-tetrahydrofolate + H(+). Attaches a formyl group to the free amino group of methionyl-tRNA(fMet). The formyl group appears to play a dual role in the initiator identity of N-formylmethionyl-tRNA by promoting its recognition by IF2 and preventing the misappropriation of this tRNA by the elongation apparatus. The sequence is that of Methionyl-tRNA formyltransferase from Edwardsiella ictaluri (strain 93-146).